The following is a 267-amino-acid chain: Undecaprenyl-diphosphatase 2 (267 aa).

Transmembrane regions (helical) follow at residues 4–24 (IYFIKAFFLGVIEGITEFLPI), 43–63 (EEKVFEVVIQLGGILAVCWLF), 84–104 (FAVIVMISFLPSAIIGALFIH), 109–129 (VLFNTTVVATALIVGGLIILW), 147–167 (IGFKQAIIIGIAQCIAMIPGT), 186–206 (AATEYSFFLAIPTMLGAAIYD), 219–239 (ILAILIGFSAAFISALIVVNA), and 243–263 (FVAKHSLSVFAWYRIALGLII).

It belongs to the UppP family.

It is found in the cell inner membrane. It catalyses the reaction di-trans,octa-cis-undecaprenyl diphosphate + H2O = di-trans,octa-cis-undecaprenyl phosphate + phosphate + H(+). Catalyzes the dephosphorylation of undecaprenyl diphosphate (UPP). Confers resistance to bacitracin. The chain is Undecaprenyl-diphosphatase 2 from Shewanella oneidensis (strain ATCC 700550 / JCM 31522 / CIP 106686 / LMG 19005 / NCIMB 14063 / MR-1).